Reading from the N-terminus, the 1827-residue chain is Phenolphthiocerol/phthiocerol polyketide synthase subunit C (1827 aa).

In terms of domain architecture, Ketosynthase family 3 (KS3) spans 35–461; it reads CEPVAVVGIG…GTNAHVVVEQ (427 aa). Catalysis depends on for beta-ketoacyl synthase activity residues Cys-207, His-342, and His-383. An acyltransferase region spans residues 566 to 876; the sequence is VFVYSGQGSQ…LAAVGVAASE (311 aa). Catalysis depends on Ser-654, which acts as the For malonyltransferase activity. Residues 910 to 1037 form an N-terminal hotdog fold region; the sequence is HPLLGAHIEM…AKVEQSPREC (128 aa). Positions 910–1076 are dehydratase; that stretch reads HPLLGAHIEM…QHHGPAFAAL (167 aa). The PKS/mFAS DH domain occupies 910–1198; sequence HPLLGAHIEM…LRRVERRAVP (289 aa). Residue His-942 is the Proton acceptor; for dehydratase activity of the active site. Residues 1050–1198 are C-terminal hotdog fold; that stretch reads GTTVSPADFY…LRRVERRAVP (149 aa). Asp-1111 functions as the Proton donor; for dehydratase activity in the catalytic mechanism. The beta-ketoacyl reductase stretch occupies residues 1439 to 1617; the sequence is ASYVVTGGLG…VINWGPWSEV (179 aa). 1440 to 1485 contacts NADP(+); it reads SYVVTGGLGGLGLVVARWLVDRGAGRVVLGGRSDPTDEQCNVLAEL. Residues 1706–1785 form the Carrier domain; the sequence is RAVTERMCAR…DLTADLMRQL (80 aa). Residue Ser-1745 is modified to O-(pantetheine 4'-phosphoryl)serine. A compositionally biased stretch (basic residues) spans 1807-1820; the sequence is RAAARHGAAMRRRP. Residues 1807–1827 are disordered; it reads RAAARHGAAMRRRPKPEVQGG.

The cofactor is NADP(+). Requires pantetheine 4'-phosphate as cofactor.

It catalyses the reaction icosanoyl-[(phenol)carboxyphthiodiolenone synthase] + 2 (S)-methylmalonyl-CoA + 3 malonyl-CoA + 5 NADPH + 10 H(+) = C32-carboxyphthiodiolenone-[(phenol)carboxyphthiodiolenone synthase] + 5 CO2 + 5 NADP(+) + 5 CoA + 2 H2O. The enzyme catalyses docosanoyl-[(phenol)carboxyphthiodiolenone synthase] + 2 (S)-methylmalonyl-CoA + 3 malonyl-CoA + 5 NADPH + 10 H(+) = C34-carboxyphthiodiolenone-[(phenol)carboxyphthiodiolenone synthase] + 5 CO2 + 5 NADP(+) + 5 CoA + 2 H2O. The catalysed reaction is 17-(4-hydroxyphenyl)heptadecanoyl-[(phenol)carboxyphthiodiolenone synthase] + 2 (S)-methylmalonyl-CoA + 3 malonyl-CoA + 5 NADPH + 10 H(+) = C35-(phenol)carboxyphthiodiolenone-[(phenol)carboxyphthiodiolenone synthase] + 5 CO2 + 5 NADP(+) + 5 CoA + 2 H2O. It carries out the reaction 19-(4-hydroxyphenyl)nonadecanoyl-[(phenol)carboxyphthiodiolenone synthase] + 2 (S)-methylmalonyl-CoA + 3 malonyl-CoA + 5 NADPH + 10 H(+) = C37-(phenol)carboxyphthiodiolenone-[(phenol)carboxyphthiodiolenone synthase] + 5 CO2 + 5 NADP(+) + 5 CoA + 2 H2O. The protein operates within lipid metabolism; fatty acid biosynthesis. Functionally, part of the PpsABCDE complex involved in the biosynthesis of the lipid core common to phthiocerols and phenolphthiocerols by successive additions of malonyl-CoA or methylmalonyl-CoA extender units. PpsA can accept as substrate the activated forms of either icosanoyl (C20), docosanoyl (C22) or lignoceroyl (C24) groups from FadD26, or a (4-hydroxyphenyl)-C17 or (4-hydroxyphenyl)-C19 fatty acyl from FadD29. PpsA initiates the biosynthesis and extends its substrate using a malonyl-CoA extender unit. The PpsB and PpsC proteins add the second and third malonyl-CoA extender units. PpsD adds an (R)-methylmalonyl unit and PpsE adds a second (R)-methylmalonyl unit. The incorporation of the methylmalonyl units results in formation of two branched methyl groups in the elongated product. The sequence is that of Phenolphthiocerol/phthiocerol polyketide synthase subunit C (ppsD) from Mycobacterium tuberculosis (strain CDC 1551 / Oshkosh).